The primary structure comprises 1323 residues: Phosphoribosylformylglycinamidine synthase (1323 aa).

Residues Gly312–Asp323, Asn391–Tyr393, and Ala691 each bind ATP. 4 residues coordinate Mg(2+): Asp692, Glu733, Asn737, and Asp903. An ATP-binding site is contributed by Ser905. The Glutamine amidotransferase type-1 domain occupies Val1062 to Gly1306. The Nucleophile role is filled by Cys1156. Active-site residues include His1284 and Glu1286.

In the N-terminal section; belongs to the FGAMS family.

The protein resides in the cytoplasm. It carries out the reaction N(2)-formyl-N(1)-(5-phospho-beta-D-ribosyl)glycinamide + L-glutamine + ATP + H2O = 2-formamido-N(1)-(5-O-phospho-beta-D-ribosyl)acetamidine + L-glutamate + ADP + phosphate + H(+). It participates in purine metabolism; IMP biosynthesis via de novo pathway; 5-amino-1-(5-phospho-D-ribosyl)imidazole from N(2)-formyl-N(1)-(5-phospho-D-ribosyl)glycinamide: step 1/2. Phosphoribosylformylglycinamidine synthase involved in the purines biosynthetic pathway. Catalyzes the ATP-dependent conversion of formylglycinamide ribonucleotide (FGAR) and glutamine to yield formylglycinamidine ribonucleotide (FGAM) and glutamate. The polypeptide is Phosphoribosylformylglycinamidine synthase (ade3) (Schizosaccharomyces pombe (strain 972 / ATCC 24843) (Fission yeast)).